The primary structure comprises 315 residues: ATP synthase gamma chain (315 aa).

This sequence belongs to the ATPase gamma chain family. As to quaternary structure, F-type ATPases have 2 components, CF(1) - the catalytic core - and CF(0) - the membrane proton channel. CF(1) has five subunits: alpha(3), beta(3), gamma(1), delta(1), epsilon(1). CF(0) has three main subunits: a, b and c.

It is found in the cellular thylakoid membrane. Functionally, produces ATP from ADP in the presence of a proton gradient across the membrane. The gamma chain is believed to be important in regulating ATPase activity and the flow of protons through the CF(0) complex. In Nostoc sp. (strain PCC 7120 / SAG 25.82 / UTEX 2576), this protein is ATP synthase gamma chain.